A 391-amino-acid polypeptide reads, in one-letter code: Chaperone protein DnaJ (391 aa).

Residues 6 to 70 (DYYEILEVSR…EKRKLYDTYG (65 aa)) enclose the J domain. A CR-type zinc finger spans residues 145 to 226 (GCIKNVKYTR…CKSRRMVDEV (82 aa)). Residues cysteine 158, cysteine 161, cysteine 174, cysteine 177, cysteine 200, cysteine 203, cysteine 214, and cysteine 217 each contribute to the Zn(2+) site. CXXCXGXG motif repeat units follow at residues 158–165 (CPDCNGSG), 174–181 (CSDCNGEG), 200–207 (CPSCKGEG), and 214–221 (CKKCKSRR).

This sequence belongs to the DnaJ family. As to quaternary structure, homodimer. Requires Zn(2+) as cofactor.

Its subcellular location is the cytoplasm. Participates actively in the response to hyperosmotic and heat shock by preventing the aggregation of stress-denatured proteins and by disaggregating proteins, also in an autonomous, DnaK-independent fashion. Unfolded proteins bind initially to DnaJ; upon interaction with the DnaJ-bound protein, DnaK hydrolyzes its bound ATP, resulting in the formation of a stable complex. GrpE releases ADP from DnaK; ATP binding to DnaK triggers the release of the substrate protein, thus completing the reaction cycle. Several rounds of ATP-dependent interactions between DnaJ, DnaK and GrpE are required for fully efficient folding. Also involved, together with DnaK and GrpE, in the DNA replication of plasmids through activation of initiation proteins. The protein is Chaperone protein DnaJ of Mycoplasmoides gallisepticum (strain R(low / passage 15 / clone 2)) (Mycoplasma gallisepticum).